The following is a 196-amino-acid chain: MLSSLSPYMANPRQTFTQVLNFALVLSTAFMLWKGLSVYTNSASPIVVVLSGSMEPAFQRGDLLFLWNRSPRVDVGEIVVYNVRGKDIPIVHRVMRTFPDVPGKDKTKKGGKQGVEASPSSLESQKLLTKGDNNLSDDTELYARGQDYLDRKEDIVGSVRGYIPAVGYVTIMLSEHPWLKSVLLGFMGLMVILQRE.

At 1–14 (MLSSLSPYMANPRQ) the chain is on the cytoplasmic side. A helical; Signal-anchor for type II membrane protein transmembrane segment spans residues 15-33 (TFTQVLNFALVLSTAFMLW). Topologically, residues 34-196 (KGLSVYTNSA…MGLMVILQRE (163 aa)) are lumenal. Catalysis depends on charge relay system residues serine 53 and histidine 92. The disordered stretch occupies residues 101-133 (VPGKDKTKKGGKQGVEASPSSLESQKLLTKGDN). Residues 118–133 (SPSSLESQKLLTKGDN) show a composition bias toward polar residues. N-linked (GlcNAc...) asparagine glycosylation occurs at asparagine 134. Residue aspartate 138 is the Charge relay system of the active site. The tract at residues 182–193 (VLLGFMGLMVIL) is C-terminal short (CTS) helix.

This sequence belongs to the peptidase S26B family. As to quaternary structure, component of the signal peptidase complex (SPC) composed of a catalytic subunit SEC11 and three accessory subunits SPC1, SPC2 and SPC3. The complex induces a local thinning of the ER membrane which is used to measure the length of the signal peptide (SP) h-region of protein substrates. This ensures the selectivity of the complex towards h-regions shorter than 18-20 amino acids. SPC associates with the translocon complex.

It localises to the endoplasmic reticulum membrane. It carries out the reaction Cleavage of hydrophobic, N-terminal signal or leader sequences from secreted and periplasmic proteins.. In terms of biological role, catalytic component of the signal peptidase complex (SPC) which catalyzes the cleavage of N-terminal signal sequences from nascent proteins as they are translocated into the lumen of the endoplasmic reticulum. Specifically cleaves N-terminal signal peptides that contain a hydrophobic alpha-helix (h-region) shorter than 18-20 amino acids. This chain is Signal peptidase complex catalytic subunit SEC11 (SEC11), found in Ajellomyces dermatitidis (strain ER-3 / ATCC MYA-2586) (Blastomyces dermatitidis).